A 434-amino-acid chain; its full sequence is FAD-dependent monooxygenase cfoG (434 aa).

The signal sequence occupies residues Met-1–Ala-22. Glu-36 contacts FAD. Residues Arg-193 and Tyr-233 contribute to the active site. Positions 314 and 327 each coordinate FAD.

This sequence belongs to the paxM FAD-dependent monooxygenase family. As to quaternary structure, monomer. It depends on FAD as a cofactor.

The protein operates within secondary metabolite biosynthesis; flavonoid biosynthesis. Functionally, monooxygenase; part of the gene cluster that mediates the biosynthesis of chlorflavonin, a fungal flavonoid with acetolactate synthase inhibitory activity. Within the pathway, cfoG is responsible for the hydroxylation of the flavonoid skeleton at position C8. The pathway begins with the PKS-NRPS hybrid synthetase cfoA that uses benzoic acid or p-hydroxybenzoic acid as a starter unit with four rounds of chain elongation using malonyl-CoA to form the chalcone skeleton. Then, a new type of chalcone isomerase, cfoK, catalyzes the conversion of the chalcone into a flavanone by a histidine-mediated oxa-Michael addition mechanism. The desaturation of flavanone to flavone is catalyzed by a new type of flavone synthase, the flavin mononucleotide (FMN)-dependent oxidoreductase cfoJ. Monooxygenases cfoF, cfoG, and P450 cfoH are responsible for the hydroxylation of the flavonoid skeleton at sites C3, C8, and C2', respectively. Like cfoF, the dehydratase cfoI plays also a role in the hydroxylation of position C3. Methyltransferases cfoB, cfoC, and cfoD then catalyze the methylation of C7-OH, C8-OH, and C3-OH, respectively. Finally, the monooxygenase cfoE is responsible for the chlorination of flavonoid at position C3'. The chain is FAD-dependent monooxygenase cfoG from Aspergillus candidus.